The primary structure comprises 319 residues: Acetyl esterase (319 aa).

The short motif at 91 to 93 (HGG) is the Involved in the stabilization of the negatively charged intermediate by the formation of the oxyanion hole element. Active-site residues include Ser-165, Asp-262, and His-292.

Belongs to the 'GDXG' lipolytic enzyme family. In terms of assembly, homodimer. Interacts with MalT and MelA.

It localises to the cytoplasm. In terms of biological role, displays esterase activity towards short chain fatty esters (acyl chain length of up to 8 carbons). Able to hydrolyze triacetylglycerol (triacetin) and tributyrylglycerol (tributyrin), but not trioleylglycerol (triolein) or cholesterol oleate. Negatively regulates MalT activity by antagonizing maltotriose binding. Inhibits MelA galactosidase activity. In Shigella flexneri serotype 5b (strain 8401), this protein is Acetyl esterase.